A 259-amino-acid polypeptide reads, in one-letter code: MAVISMKQLLEAGVHFGHQTRRWNPKMAKYIFTERNGIHVIDLQQTVKYADQAYDFMRDAAANDAVVLFVGTKKQAADAVAEEAVRSGQYFINHRWLGGTLTNWGTIQKRIARLKEIKRMEEDGTFEVLPKKEVALLNKQRARLEKFLGGIEDMPRIPDVMYVVDPHKEQIAVKEAKKLGIPVVAMVDTNTDPDDIDVIIPANDDAIRAVKLITAKLADAIIEGRQGEDAVAVEAEFAALETQADSIEEIVEVVEGDNA.

Belongs to the universal ribosomal protein uS2 family.

The sequence is that of Small ribosomal subunit protein uS2 from Streptococcus pneumoniae serotype 4 (strain ATCC BAA-334 / TIGR4).